Here is a 277-residue protein sequence, read N- to C-terminus: Phosphonates import ATP-binding protein PhnC 2 (277 aa).

One can recognise an ABC transporter domain in the interval Ile5–Ala253. Residue Gly37–Ser44 coordinates ATP.

Belongs to the ABC transporter superfamily. Phosphonates importer (TC 3.A.1.9.1) family. The complex is composed of two ATP-binding proteins (PhnC), two transmembrane proteins (PhnE) and a solute-binding protein (PhnD).

The protein localises to the cell inner membrane. The catalysed reaction is phosphonate(out) + ATP + H2O = phosphonate(in) + ADP + phosphate + H(+). Functionally, part of the ABC transporter complex PhnCDE involved in phosphonates import. Responsible for energy coupling to the transport system. The polypeptide is Phosphonates import ATP-binding protein PhnC 2 (Pseudomonas syringae pv. syringae (strain B728a)).